A 94-amino-acid chain; its full sequence is Sulfocarbamoylase-1 (94 aa).

As to quaternary structure, homodimer. As to expression, ubiquitous (at protein level). Highest levels of expression in crystalline style followed by digestive gland and mantle.

Strongly inhibited by the serine proteinase inhibitor AEBSF. Weakly inhibited by the proteinase inhibitors BSF and aprotinin, and by EDTA. Not inhibited by the proteinase inhibitors bestatin, E-64 and leupeptin. Functionally, hydrolysis of sulfocarbamoyl esters of paralytic shellfish toxins. Does not hydrolyze the carbamoyl esters of paralytic shellfish toxins. Ester hydrolysis is significantly affected by the stereochemistry of sulfate esters at C-11 of the substrate toxin. The polypeptide is Sulfocarbamoylase-1 (Megangulus venulosus (Japanese bivalve)).